The chain runs to 137 residues: Probable 4-amino-4-deoxy-L-arabinose-phosphoundecaprenol flippase subunit ArnF (137 aa).

The Cytoplasmic segment spans residues 1-3 (MNA). The chain crosses the membrane as a helical span at residues 4–24 (LRGWLAALGSVLLASAAQLGM). Residues 25-44 (RWGMSRLPLPEAWAGQTPER) are Periplasmic-facing. Residues 45 to 65 (AALLAVALAVAAYAASLLCWL) form a helical membrane-spanning segment. Residues 66–76 (AALRHLPLGRA) are Cytoplasmic-facing. The chain crosses the membrane as a helical span at residues 77–97 (YSLLSASYALVYLLAASLPAF). The Periplasmic segment spans residues 98–100 (DET). A helical membrane pass occupies residues 101-121 (FSTSKTLGVGLVVLGVLTVNA). Residues 122 to 137 (RRTAAAPAHHPSRKAP) lie on the Cytoplasmic side of the membrane.

It belongs to the ArnF family. In terms of assembly, heterodimer of ArnE and ArnF.

Its subcellular location is the cell inner membrane. Its pathway is bacterial outer membrane biogenesis; lipopolysaccharide biosynthesis. Translocates 4-amino-4-deoxy-L-arabinose-phosphoundecaprenol (alpha-L-Ara4N-phosphoundecaprenol) from the cytoplasmic to the periplasmic side of the inner membrane. The protein is Probable 4-amino-4-deoxy-L-arabinose-phosphoundecaprenol flippase subunit ArnF of Pseudomonas aeruginosa (strain ATCC 15692 / DSM 22644 / CIP 104116 / JCM 14847 / LMG 12228 / 1C / PRS 101 / PAO1).